The sequence spans 212 residues: Thymidylate kinase (212 aa).

ATP is bound at residue 10-17 (GLEGAGKT).

Belongs to the thymidylate kinase family.

The catalysed reaction is dTMP + ATP = dTDP + ADP. Its function is as follows. Phosphorylation of dTMP to form dTDP in both de novo and salvage pathways of dTTP synthesis. In Cronobacter sakazakii (strain ATCC BAA-894) (Enterobacter sakazakii), this protein is Thymidylate kinase.